Reading from the N-terminus, the 370-residue chain is Neutral protease 2 homolog AFUB_070680 (370 aa).

The signal sequence occupies residues 1-19 (MKVTILASAILALINGALA). The propeptide occupies 20–172 (LPANTPTLDV…PQAIKLLDRR (153 aa)). Intrachain disulfides connect cysteine 178–cysteine 250 and cysteine 257–cysteine 275. Histidine 300 contacts Zn(2+). Glutamate 301 is an active-site residue. Zn(2+) contacts are provided by histidine 304 and aspartate 315.

This sequence belongs to the peptidase M35 family. The cofactor is Zn(2+).

It is found in the secreted. It catalyses the reaction Preferential cleavage of bonds with hydrophobic residues in P1'. Also 3-Asn-|-Gln-4 and 8-Gly-|-Ser-9 bonds in insulin B chain.. Functionally, secreted metalloproteinase that allows assimilation of proteinaceous substrates. Shows high activities on basic nuclear substrates such as histone and protamine. May be involved in virulence. The sequence is that of Neutral protease 2 homolog AFUB_070680 from Aspergillus fumigatus (strain CBS 144.89 / FGSC A1163 / CEA10) (Neosartorya fumigata).